Here is a 1224-residue protein sequence, read N- to C-terminus: A disintegrin and metalloproteinase with thrombospondin motifs 16 (1224 aa).

The signal sequence occupies residues 1–24 (MKPRARGWRGLAALWMLLAQVAEQ). Positions 25-279 (APACAMGPAA…EYKSCLRHKR (255 aa)) are excised as a propeptide. Residues 31-53 (GPAAAAPGSPSVPRPPPPAERPG) form a disordered region. Over residues 40-50 (PSVPRPPPPAE) the composition is skewed to pro residues. A glycan (N-linked (GlcNAc...) asparagine) is linked at Asn156. A Cysteine switch motif is present at residues 247–254 (HFCGRRKK). Residue Cys249 coordinates Zn(2+). One can recognise a Peptidase M12B domain in the interval 290 to 495 (LNVETLVVVD…AQAICLADQP (206 aa)). Asn310 carries an N-linked (GlcNAc...) asparagine glycan. Intrachain disulfides connect Cys366-Cys417, Cys392-Cys399, Cys411-Cys490, Cys450-Cys474, Cys518-Cys543, Cys529-Cys550, Cys538-Cys569, Cys563-Cys574, Cys598-Cys635, Cys602-Cys640, and Cys613-Cys625. His433 is a Zn(2+) binding site. Glu434 is a catalytic residue. The Zn(2+) site is built by His437 and His443. In terms of domain architecture, Disintegrin spans 496-585 (KPVKEYKYPE…KYGDEGPKPT (90 aa)). The 56-residue stretch at 586–641 (HGHWSDWSSWSPCSRTCGGGVSHRSRLCTNPKPSHGGKFCEGSTRTLKLCNSQKCP) folds into the TSP type-1 1 domain. Asn741, Asn780, Asn835, Asn905, and Asn935 each carry an N-linked (GlcNAc...) asparagine glycan. Residues 747–873 (IHRGLYTKHH…KQPPAQPSYT (127 aa)) form a spacer region. TSP type-1 domains are found at residues 874–922 (WAIV…LVPC), 927–987 (CPPS…QSCP), 988–1048 (PAWS…QRCH), 1051–1115 (KKLQ…LPCP), and 1127–1181 (RGSW…HFCP). Cystine bridges form between Cys939–Cys981, Cys943–Cys986, and Cys954–Cys970. Positions 1186 to 1223 (KDAFCKDYFHWCYLVPQHGMCSHKFYGKQCCKTCSKSN) constitute a PLAC domain.

Zn(2+) serves as cofactor. The precursor is cleaved by a furin endopeptidase. Post-translationally, glycosylated. Can be O-fucosylated by POFUT2 on a serine or a threonine residue found within the consensus sequence C1-X(2)-(S/T)-C2-G of the TSP type-1 repeat domains where C1 and C2 are the first and second cysteine residue of the repeat, respectively. Fucosylated repeats can then be further glycosylated by the addition of a beta-1,3-glucose residue by the glucosyltransferase, B3GALTL. Fucosylation mediates the efficient secretion of ADAMTS family members. Can also be C-glycosylated with one or two mannose molecules on tryptophan residues within the consensus sequence W-X-X-W of the TPRs, and N-glycosylated. These other glycosylations can also facilitate secretion. As to expression, expressed in fetal lung and kidney and in adult prostate and ovary.

Its subcellular location is the secreted. The protein resides in the extracellular space. The protein localises to the extracellular matrix. The polypeptide is A disintegrin and metalloproteinase with thrombospondin motifs 16 (ADAMTS16) (Homo sapiens (Human)).